Reading from the N-terminus, the 293-residue chain is MAVSASLVKELRERTGLGMMECKKALAETDGDIDAAIENLRKASGLKAAKKADRTAAEGVVAAKVADDGSYGVLVEVNSETDFVARDAGFLAFVDSVVEKAFSAKAADVAAVNDEAMESTRQALVQKIGENIGIRRVSLIEADGGLVGAYVHSNNRIAVMVQLANGGSVELAKDVAMHIAAVNPQVVNPEDMPEEVVNKEKDIIKAQPDMEGKPEQIVEKMMTGRINKFLKENSLVEQPFVKDPEITVGALVKKEGASVVSFSRFEVGEGIEKKEEDFAAEVAAQVAASKGNA.

The segment at 81–84 is involved in Mg(2+) ion dislocation from EF-Tu; the sequence is TDFV.

It belongs to the EF-Ts family.

The protein localises to the cytoplasm. Its function is as follows. Associates with the EF-Tu.GDP complex and induces the exchange of GDP to GTP. It remains bound to the aminoacyl-tRNA.EF-Tu.GTP complex up to the GTP hydrolysis stage on the ribosome. This chain is Elongation factor Ts, found in Teredinibacter turnerae (strain ATCC 39867 / T7901).